The following is a 463-amino-acid chain: MSTNQIILTDQGDNYVNVWSHVAQDLYNHYGETLYNSWFSKVNFIESSLNTVILCAPTNFVRDWIKSKYSMVILQLFQHYNNTIKSIEIITKELPGTTQTVTELPTKTFADIGSSELNSENIFSTLDARFTFDNFVVGAPNELAYAAARAVAESSGAVSESNPLFLYGGVGLGKTHLMHAIGWYIKQHNPSRKVIYMSAEKFMYQFVKALRNKEVISFKEKFRSVDVLMIDDIQFICGKDSTQEEFFHTFNTLIDNNRQMVISCDRSPSDLDNIEDRIKSRLGWGLVADVHSTTYELRLGILESKIEQMNVKIPKDVIDFLASKIVSNVRELEGALNKVIAHSNFTLKEITLENTQNILRDLLRSNERIITVEDIQKKVASRYNIKLSDMSSSRRLREVARPRQIAMYLSKALTPKSLADIGKKFGKKDHTTVMHAIKKVEELLENDIELREEINLLMKILQN.

The segment at 1 to 83 (MSTNQIILTD…LQLFQHYNNT (83 aa)) is domain I, interacts with DnaA modulators. The tract at residues 83–124 (TIKSIEIITKELPGTTQTVTELPTKTFADIGSSELNSENIFS) is domain II. Residues 125–343 (TLDARFTFDN…GALNKVIAHS (219 aa)) form a domain III, AAA+ region region. Gly171, Gly173, Lys174, and Thr175 together coordinate ATP. Residues 344-463 (NFTLKEITLE…INLLMKILQN (120 aa)) form a domain IV, binds dsDNA region.

It belongs to the DnaA family. In terms of assembly, oligomerizes as a right-handed, spiral filament on DNA at oriC.

It localises to the cytoplasm. In terms of biological role, plays an essential role in the initiation and regulation of chromosomal replication. ATP-DnaA binds to the origin of replication (oriC) to initiate formation of the DNA replication initiation complex once per cell cycle. Binds the DnaA box (a 9 base pair repeat at the origin) and separates the double-stranded (ds)DNA. Forms a right-handed helical filament on oriC DNA; dsDNA binds to the exterior of the filament while single-stranded (ss)DNA is stabiized in the filament's interior. The ATP-DnaA-oriC complex binds and stabilizes one strand of the AT-rich DNA unwinding element (DUE), permitting loading of DNA polymerase. After initiation quickly degrades to an ADP-DnaA complex that is not apt for DNA replication. Binds acidic phospholipids. The chain is Chromosomal replication initiator protein DnaA from Rickettsia peacockii (strain Rustic).